The primary structure comprises 255 residues: Acetylglutamate kinase (255 aa).

Residues 40-41 (GG), Arg62, and Asn153 each bind substrate.

It belongs to the acetylglutamate kinase family. ArgB subfamily.

The protein localises to the cytoplasm. It carries out the reaction N-acetyl-L-glutamate + ATP = N-acetyl-L-glutamyl 5-phosphate + ADP. It functions in the pathway amino-acid biosynthesis; L-arginine biosynthesis; N(2)-acetyl-L-ornithine from L-glutamate: step 2/4. Functionally, catalyzes the ATP-dependent phosphorylation of N-acetyl-L-glutamate. The chain is Acetylglutamate kinase from Bacillus cereus (strain AH187).